Here is a 317-residue protein sequence, read N- to C-terminus: Putative HTH-type transcriptional regulatory protein NP_1320A (317 aa).

The HTH cro/C1-type domain occupies 132–189 (LSDIRSQEDMSLGKLANELGVSRRTVSKYEDGMSASVEVAAELEEIFDRKLASPVEVL). Positions 143–162 (LGKLANELGVSRRTVSKYED) form a DNA-binding region, H-T-H motif.

This Natronomonas pharaonis (strain ATCC 35678 / DSM 2160 / CIP 103997 / JCM 8858 / NBRC 14720 / NCIMB 2260 / Gabara) (Halobacterium pharaonis) protein is Putative HTH-type transcriptional regulatory protein NP_1320A.